Consider the following 194-residue polypeptide: Orotate phosphoribosyltransferase (194 aa).

114 to 122 (EDVVTTGKS) lines the 5-phospho-alpha-D-ribose 1-diphosphate pocket. Positions 118 and 146 each coordinate orotate.

This sequence belongs to the purine/pyrimidine phosphoribosyltransferase family. PyrE subfamily. As to quaternary structure, homodimer. Mg(2+) serves as cofactor.

It catalyses the reaction orotidine 5'-phosphate + diphosphate = orotate + 5-phospho-alpha-D-ribose 1-diphosphate. It functions in the pathway pyrimidine metabolism; UMP biosynthesis via de novo pathway; UMP from orotate: step 1/2. Catalyzes the transfer of a ribosyl phosphate group from 5-phosphoribose 1-diphosphate to orotate, leading to the formation of orotidine monophosphate (OMP). The polypeptide is Orotate phosphoribosyltransferase (Clostridioides difficile (strain 630) (Peptoclostridium difficile)).